We begin with the raw amino-acid sequence, 417 residues long: Serine hydroxymethyltransferase 1 (417 aa).

(6S)-5,6,7,8-tetrahydrofolate is bound by residues Leu-121 and 125–127; that span reads GHL. Lys-230 is modified (N6-(pyridoxal phosphate)lysine). Residue 355 to 357 participates in (6S)-5,6,7,8-tetrahydrofolate binding; that stretch reads SPF.

The protein belongs to the SHMT family. In terms of assembly, homodimer. It depends on pyridoxal 5'-phosphate as a cofactor.

The protein resides in the cytoplasm. It carries out the reaction (6R)-5,10-methylene-5,6,7,8-tetrahydrofolate + glycine + H2O = (6S)-5,6,7,8-tetrahydrofolate + L-serine. It functions in the pathway one-carbon metabolism; tetrahydrofolate interconversion. It participates in amino-acid biosynthesis; glycine biosynthesis; glycine from L-serine: step 1/1. In terms of biological role, catalyzes the reversible interconversion of serine and glycine with tetrahydrofolate (THF) serving as the one-carbon carrier. This reaction serves as the major source of one-carbon groups required for the biosynthesis of purines, thymidylate, methionine, and other important biomolecules. Also exhibits THF-independent aldolase activity toward beta-hydroxyamino acids, producing glycine and aldehydes, via a retro-aldol mechanism. The sequence is that of Serine hydroxymethyltransferase 1 from Pseudomonas putida (strain ATCC 47054 / DSM 6125 / CFBP 8728 / NCIMB 11950 / KT2440).